We begin with the raw amino-acid sequence, 401 residues long: tRNA(Met) cytidine acetate ligase (401 aa).

ATP contacts are provided by residues 7–20 (IVEYNPFHNGHLYH), glycine 102, asparagine 164, and arginine 189.

This sequence belongs to the TmcAL family.

It localises to the cytoplasm. It carries out the reaction cytidine(34) in elongator tRNA(Met) + acetate + ATP = N(4)-acetylcytidine(34) in elongator tRNA(Met) + AMP + diphosphate. Catalyzes the formation of N(4)-acetylcytidine (ac(4)C) at the wobble position of elongator tRNA(Met), using acetate and ATP as substrates. First activates an acetate ion to form acetyladenylate (Ac-AMP) and then transfers the acetyl group to tRNA to form ac(4)C34. This chain is tRNA(Met) cytidine acetate ligase, found in Thermoanaerobacter sp. (strain X514).